The sequence spans 234 residues: UPF0173 metal-dependent hydrolase RHE_CH01853 (234 aa).

Belongs to the UPF0173 family.

The protein is UPF0173 metal-dependent hydrolase RHE_CH01853 of Rhizobium etli (strain ATCC 51251 / DSM 11541 / JCM 21823 / NBRC 15573 / CFN 42).